The following is a 1330-amino-acid chain: Fanconi anemia group I protein homolog (1330 aa).

A Glycyl lysine isopeptide (Lys-Gly) (interchain with G-Cter in ubiquitin) cross-link involves residue Lys522. Residue Ser555 is modified to Phosphoserine. Thr558 is subject to Phosphothreonine. The residue at position 729 (Ser729) is a Phosphoserine. Thr948 bears the Phosphothreonine mark. Ser1122 carries the post-translational modification Phosphoserine. The disordered stretch occupies residues 1299–1330; sequence EDEEDENEEGTASAHTQQDREPAKKRRKKCLS. Positions 1321 to 1330 are enriched in basic residues; it reads AKKRRKKCLS.

This sequence belongs to the Fanconi anemia group I protein family. In terms of assembly, homodimer. Part of a FANCI-FANCD2 heterodimeric complex that binds and scans dsDNA for DNA damage. Interacts with FANCL. Interacts with MTMR15/FAN1. Interacts with POLN. Interacts with UBL5; the interaction promotes FANCI homodimerization. Post-translationally, monoubiquitinated by FANCL on Lys-522 during S phase and upon genotoxic stress. Deubiquitinated by USP1 as cells enter G2/M, or once DNA repair is completed. Monoubiquitination requires the FANCA-FANCB-FANCC-FANCE-FANCF-FANCG-FANCM complex. Ubiquitination is required for binding to chromatin, DNA repair, and normal cell cycle progression. Monoubiquitination is stimulated by DNA-binding. Phosphorylated in response to DNA damage by ATM and/or ATR. Phosphorylation of FANCI promotes ubiquitination of FANCD2, which prevents DNA release from the FANCI-FANCD2 complex.

It is found in the nucleus. The protein localises to the cytoplasm. Its function is as follows. Plays an essential role in the repair of DNA double-strand breaks by homologous recombination and in the repair of interstrand DNA cross-links (ICLs) by promoting FANCD2 monoubiquitination by FANCL and participating in recruitment to DNA repair sites. The FANCI-FANCD2 complex binds and scans double-stranded DNA (dsDNA) for DNA damage; this complex stalls at DNA junctions between double-stranded DNA and single-stranded DNA. Participates in S phase and G2 phase checkpoint activation upon DNA damage. In Mus musculus (Mouse), this protein is Fanconi anemia group I protein homolog (Fanci).